The following is a 360-amino-acid chain: MSLIRLNIDSFRNIQLAQLSPSSGINLIYGQNGSGKTSILEAIYFLGMGRSFRSHLSQRVINNEQDKLTLFATLNLPRGDSKIGLRRFRSGETEVKIDGEKVKRLSTLAETLPIQVITPESFSLLFEGPKSRRQFIDWGAFHSDPQFYAAWVNVRRVLKQRNQLLRNNSSYDQIQYWDREFVRYTEQVTEIRNRYVDSLNELLKGIIGEFLPQVDVKVSFTRGWDSKTDFAQLLESQYPRDLATGHTVSGPHKADLRLRVGSLPAQDALSRGQLKLLVCALRIAQGKLLKQQIDKHSIYLVDDLPSELDAQHRQLLLKQLVDTGAQVFVTAIEPAAIVDSLHTPPSRMFHVEQGRVTVIE.

Residue 30–37 (GQNGSGKT) participates in ATP binding.

The protein belongs to the RecF family.

Its subcellular location is the cytoplasm. Its function is as follows. The RecF protein is involved in DNA metabolism; it is required for DNA replication and normal SOS inducibility. RecF binds preferentially to single-stranded, linear DNA. It also seems to bind ATP. This is DNA replication and repair protein RecF from Shewanella sp. (strain MR-4).